Here is a 91-residue protein sequence, read N- to C-terminus: Probable Fe(2+)-trafficking protein (91 aa).

Belongs to the Fe(2+)-trafficking protein family.

Functionally, could be a mediator in iron transactions between iron acquisition and iron-requiring processes, such as synthesis and/or repair of Fe-S clusters in biosynthetic enzymes. In Cellvibrio japonicus (strain Ueda107) (Pseudomonas fluorescens subsp. cellulosa), this protein is Probable Fe(2+)-trafficking protein.